A 207-amino-acid polypeptide reads, in one-letter code: CASP-like protein 1D1 (207 aa).

The Cytoplasmic portion of the chain corresponds to 1 to 40; it reads MATVDGTTAPSSGGKTATVALESGGGRYGGPAPAKCSGAN. Residues 41-61 form a helical membrane-spanning segment; the sequence is LALRALLFAVSLSALVVLVTA. Topologically, residues 62-89 are extracellular; that stretch reads KQTVMVPFVIRPPQFILAPVPAKYTHSP. A helical membrane pass occupies residues 90–110; the sequence is ALIYLLAALCATCFYSLITAI. Topologically, residues 111-124 are cytoplasmic; that stretch reads SSVRLLSSSACSAK. Residues 125 to 145 form a helical membrane-spanning segment; the sequence is TLFYLILLDVFYAAVMASATG. At 146-176 the chain is on the extracellular side; the sequence is TAGAVAWVGLKGNSHTRWNKICNVYGKFCRH. The chain crosses the membrane as a helical span at residues 177-197; sequence IGSSTFLALIAAIVLVLLAFL. Topologically, residues 198 to 207 are cytoplasmic; sequence NAYSLYRRSR.

Belongs to the Casparian strip membrane proteins (CASP) family. As to quaternary structure, homodimer and heterodimers.

It is found in the cell membrane. The sequence is that of CASP-like protein 1D1 from Oryza sativa subsp. japonica (Rice).